A 292-amino-acid chain; its full sequence is E3 ubiquitin-protein ligase RNF144A (292 aa).

Residues Pro-16–Leu-236 are TRIAD supradomain. The Zn(2+) site is built by Cys-20, Cys-23, Cys-43, Cys-46, Cys-111, Cys-116, Cys-135, Cys-138, Cys-143, Cys-146, His-151, Cys-156, Cys-185, and Cys-188. An RING-type 1 zinc finger spans residues Cys-20–Cys-70. Residues Gln-91 to Cys-156 form an IBR-type zinc finger. Residues Cys-185–Cys-214 form an RING-type 2; atypical zinc finger. The active site involves Cys-198. The Zn(2+) site is built by Cys-203, Cys-206, Cys-211, Cys-214, His-226, and Cys-232. Residues Val-250–Leu-270 form a helical membrane-spanning segment.

The protein belongs to the RBR family. RNF144 subfamily. In terms of assembly, self-associates. Interacts with UBE2L3. Post-translationally, autoubiquitinated.

The protein resides in the cell membrane. It is found in the cytoplasmic vesicle membrane. It carries out the reaction [E2 ubiquitin-conjugating enzyme]-S-ubiquitinyl-L-cysteine + [acceptor protein]-L-lysine = [E2 ubiquitin-conjugating enzyme]-L-cysteine + [acceptor protein]-N(6)-ubiquitinyl-L-lysine.. Its pathway is protein modification; protein ubiquitination. In terms of biological role, E3 ubiquitin-protein ligase which accepts ubiquitin from E2 ubiquitin-conjugating enzymes UBE2L3 and UBE2L6 in the form of a thioester and then directly transfers the ubiquitin to targeted substrates. Mediates the ubiquitination and degradation of the DNA damage kinase PRKDC during DNA damage. Positively regulates DNA virus or exogenous cytosolic DNA-triggered innate immune response by mediating STING1 ubiquitination and increasing its 'Lys-6'-linked ubiquitination and translocation from the endoplasmic reticulum to the Golgi leading to downstream signaling pathways. Plays a positive role in EGF-dependent cell proliferation by prolonging EGF/EGFR signaling during EGF stimulation through EGFR ubiquitination. Increases ERK activity independently of EGFR signaling by promoting polyubiquitination and subsequent degradation of VRK3 in the cytosol. This is E3 ubiquitin-protein ligase RNF144A (Rnf144a) from Mus musculus (Mouse).